A 148-amino-acid chain; its full sequence is MKALIVLGLVLLSVMVQGKVFERCELARTLKRLGMDGYRGISLANWMCLAKWESGYNTRATNYNAGDRSTDYGIFQINSRYWCNDGKTPGAVNACHLSCSALLQDNIADAVACAKRVVRDPQGIRAWVAWRNRCQNRDVRQYVQGCGV.

The signal sequence occupies residues 1 to 18 (MKALIVLGLVLLSVMVQG). The C-type lysozyme domain occupies 19-148 (KVFERCELAR…VRQYVQGCGV (130 aa)). Cystine bridges form between C24–C146, C48–C134, C83–C99, and C95–C113. Catalysis depends on residues E53 and D71.

Belongs to the glycosyl hydrolase 22 family. As to quaternary structure, monomer.

The enzyme catalyses Hydrolysis of (1-&gt;4)-beta-linkages between N-acetylmuramic acid and N-acetyl-D-glucosamine residues in a peptidoglycan and between N-acetyl-D-glucosamine residues in chitodextrins.. In terms of biological role, lysozymes have primarily a bacteriolytic function; those in tissues and body fluids are associated with the monocyte-macrophage system and enhance the activity of immunoagents. The protein is Lysozyme C (LYZ) of Gorilla gorilla gorilla (Western lowland gorilla).